The sequence spans 406 residues: ATP-dependent RNA helicase eIF4A (406 aa).

A Q motif motif is present at residues 25–53; that stretch reads DSFDAMDLKPELLRGVYAYGFERPSAIQQ. The 171-residue stretch at 56-226 folds into the Helicase ATP-binding domain; the sequence is ILPIIKGNDV…TKFMRDPVRI (171 aa). 69–76 serves as a coordination point for ATP; the sequence is AQSGTGKT. Positions 174 to 177 match the DEAD box motif; it reads DEAD. The 162-residue stretch at 237–398 folds into the Helicase C-terminal domain; that stretch reads GIKQFYIAVE…EMPMNVAGKF (162 aa).

Belongs to the DEAD box helicase family. eIF4A subfamily. Component of the eIF4F complex, which composition varies with external and internal environmental conditions. It is composed of at least eIF4A, eIF4E and eIF4G.

The protein localises to the cytoplasm. It carries out the reaction ATP + H2O = ADP + phosphate + H(+). Functionally, ATP-dependent RNA helicase which is a subunit of the eIF4F complex involved in cap recognition and is required for mRNA binding to ribosome. In the current model of translation initiation, eIF4A unwinds RNA secondary structures in the 5'-UTR of mRNAs which is necessary to allow efficient binding of the small ribosomal subunit, and subsequent scanning for the initiator codon. This Aspergillus fumigatus (strain ATCC MYA-4609 / CBS 101355 / FGSC A1100 / Af293) (Neosartorya fumigata) protein is ATP-dependent RNA helicase eIF4A (tif1).